A 324-amino-acid chain; its full sequence is Beta-ketoacyl-[acyl-carrier-protein] synthase III (324 aa).

Catalysis depends on residues Cys114 and His251. The tract at residues 252–256 (QANKR) is ACP-binding. Asn281 is a catalytic residue.

This sequence belongs to the thiolase-like superfamily. FabH family. In terms of assembly, homodimer.

It localises to the cytoplasm. The enzyme catalyses malonyl-[ACP] + acetyl-CoA + H(+) = 3-oxobutanoyl-[ACP] + CO2 + CoA. Its pathway is lipid metabolism; fatty acid biosynthesis. Functionally, catalyzes the condensation reaction of fatty acid synthesis by the addition to an acyl acceptor of two carbons from malonyl-ACP. Catalyzes the first condensation reaction which initiates fatty acid synthesis and may therefore play a role in governing the total rate of fatty acid production. Possesses both acetoacetyl-ACP synthase and acetyl transacylase activities. Its substrate specificity determines the biosynthesis of branched-chain and/or straight-chain of fatty acids. The chain is Beta-ketoacyl-[acyl-carrier-protein] synthase III from Bradyrhizobium sp. (strain BTAi1 / ATCC BAA-1182).